The sequence spans 68 residues: Cytotoxic linear peptide (68 aa).

The first 23 residues, 1–23 (MKTQFAILLIALVLFQMFSQSEA), serve as a signal peptide directing secretion. Leucine 36 carries the leucine amide modification. A propeptide spanning residues 40–68 (GLNELDDLDELFDGEISQADIDFLKELMS) is cleaved from the precursor.

It belongs to the non-disulfide-bridged peptide (NDBP) superfamily. Short antimicrobial peptide (group 4) family. In terms of tissue distribution, expressed by the venom gland.

It is found in the secreted. The protein resides in the target cell membrane. Functionally, amphipathic peptide that has antibacterial activities. This is Cytotoxic linear peptide from Pandinus cavimanus (Tanzanian red clawed scorpion).